Here is a 392-residue protein sequence, read N- to C-terminus: DNA-directed RNA polymerase subunit Rpo1C (392 aa).

The protein belongs to the RNA polymerase beta' chain family. Part of the 13-subunit RNA polymerase complex.

The protein localises to the cytoplasm. It carries out the reaction RNA(n) + a ribonucleoside 5'-triphosphate = RNA(n+1) + diphosphate. Its function is as follows. DNA-dependent RNA polymerase (RNAP) catalyzes the transcription of DNA into RNA using the four ribonucleoside triphosphates as substrates. Forms part of the jaw domain. The sequence is that of DNA-directed RNA polymerase subunit Rpo1C from Saccharolobus solfataricus (strain ATCC 35092 / DSM 1617 / JCM 11322 / P2) (Sulfolobus solfataricus).